A 555-amino-acid polypeptide reads, in one-letter code: MSTDFDRIYYNQSKLGGRFRLAEGGLGWKASATGGSASTQNNEPLLLAADEVSSVQWSRGCRGYELKISTKNKGLIQMDGFQQEDFNLLKNDFQRRFNMQLEHREHSLRGWNWGKLDLARNEMVFSLNGKPTFEIPYTHINNTNLTAKNEIALEFDTQNEAYNPAGDELVEMRLYVPGTVEENEDQDQIMVKDEAEAEDGVKSEVKTEEGSEEPDVQEEKTLAEYFYEELRSKADIGEISGDAIISFQDLFFTTPRGRYDIDIYKNSIRLRGKTYEYKLQHRQINRIFSLPKADDIHYLMVLSIDPPIRQGQTSYPFLVLQFQKDEETEVQLNVEDDEFEKLYKDKLKKQYDAKTHIVLSHVLKGLTGRRVIVPGEYKSKYDQCAVSCSYKVNEGHLYPLDNAFLFLTKPTLYIPFQDIAAVNISRAGQTSTSARTFDLEVVMRANRGTTTFANISKEEQQLLETFLRSKNLRVKNEDKEAEQRLQTAFGSDSDDDDVDINMGSAGEDEESVDEDFHASDEDDDVAEEFDSEASASDSEGETSKSERPSKKAKLE.

Positions 194 to 209 are enriched in basic and acidic residues; sequence EAEAEDGVKSEVKTEE. 2 disordered regions span residues 194-217 and 476-555; these read EAEAEDGVKSEVKTEEGSEEPDVQ and NEDK…AKLE. Residues 520-531 are compositionally biased toward acidic residues; the sequence is DEDDDVAEEFDS. Residues 541–555 show a composition bias toward basic and acidic residues; it reads ETSKSERPSKKAKLE.

This sequence belongs to the SSRP1 family. As to quaternary structure, forms a stable heterodimer with SPT16. The SPT16-POB3 dimer weakly associates with multiple molecules of NHP6 to form the FACT complex.

Its subcellular location is the nucleus. The protein resides in the chromosome. Component of the FACT complex, a general chromatin factor that acts to reorganize nucleosomes. The FACT complex is involved in multiple processes that require DNA as a template such as mRNA elongation, DNA replication and DNA repair. During transcription elongation the FACT complex acts as a histone chaperone that both destabilizes and restores nucleosomal structure. It facilitates the passage of RNA polymerase II and transcription by promoting the dissociation of one histone H2A-H2B dimer from the nucleosome, then subsequently promotes the reestablishment of the nucleosome following the passage of RNA polymerase II. This chain is FACT complex subunit POB3 (POB3), found in Kluyveromyces lactis (strain ATCC 8585 / CBS 2359 / DSM 70799 / NBRC 1267 / NRRL Y-1140 / WM37) (Yeast).